The primary structure comprises 55 residues: Sporulation killing factor (55 aa).

A propeptide spanning residues 1-29 (MKRNQKEWESVSKKGLMKPGGTSIVKAAG) is cleaved from the precursor. Cysteines 30 and 45 form a disulfide. The segment at residues 30-55 (CMGCWASKSIAMTRVCALPHPAMRAI) is a cross-link (cyclopeptide (Cys-Ile)). Residues 33–41 (CWASKSIAM) constitute a cross-link (2-(S-cysteinyl)-methionine (Cys-Met)).

In terms of processing, this is a cyclic peptide. The first step in SKF maturation is probably thioether bond formation.

It localises to the secreted. Its function is as follows. Produces a 26-residue extracellular sporulation killing factor (SKF) that induces the lysis of other B.subtilis cells that have not entered the sporulation pathway, providing a source of nutrients to support sporulation, and at the same time delaying commitment to the energetically expensive and irreversible onset of sporulation. Can also inhibit growth of other bacteria at high concentrations. Addition of SKF to solid cultures induces killing, but it is much less effective than SDP (AC O34344). Has a role in protecting the secreted lipase LipA against proteolysis, either by modulating its folding or by acting as a protease inhibitor. This is Sporulation killing factor from Bacillus subtilis (strain 168).